Reading from the N-terminus, the 194-residue chain is RNA polymerase II subunit A C-terminal domain phosphatase SSU72 like protein 5 (194 aa).

The protein belongs to the SSU72 phosphatase family.

The protein localises to the nucleus. It carries out the reaction O-phospho-L-seryl-[protein] + H2O = L-seryl-[protein] + phosphate. It catalyses the reaction O-phospho-L-threonyl-[protein] + H2O = L-threonyl-[protein] + phosphate. Its function is as follows. Protein phosphatase that catalyzes the dephosphorylation of the C-terminal domain of RNA polymerase II. Plays a role in RNA processing and termination. The sequence is that of RNA polymerase II subunit A C-terminal domain phosphatase SSU72 like protein 5 from Homo sapiens (Human).